Consider the following 471-residue polypeptide: Cysteine--tRNA ligase (471 aa).

C29 serves as a coordination point for Zn(2+). Residues 31–41 carry the 'HIGH' region motif; sequence PTVYNYIHIGN. Zn(2+) contacts are provided by C209, H234, and E238. Residues 266-270 carry the 'KMSKS' region motif; the sequence is KMSKS. K269 contacts ATP.

This sequence belongs to the class-I aminoacyl-tRNA synthetase family. In terms of assembly, monomer. Zn(2+) is required as a cofactor.

The protein resides in the cytoplasm. It carries out the reaction tRNA(Cys) + L-cysteine + ATP = L-cysteinyl-tRNA(Cys) + AMP + diphosphate. This is Cysteine--tRNA ligase from Listeria monocytogenes serotype 4b (strain CLIP80459).